The chain runs to 191 residues: Protein GrpE (191 aa).

The protein belongs to the GrpE family. In terms of assembly, homodimer.

Its subcellular location is the cytoplasm. Its function is as follows. Participates actively in the response to hyperosmotic and heat shock by preventing the aggregation of stress-denatured proteins, in association with DnaK and GrpE. It is the nucleotide exchange factor for DnaK and may function as a thermosensor. Unfolded proteins bind initially to DnaJ; upon interaction with the DnaJ-bound protein, DnaK hydrolyzes its bound ATP, resulting in the formation of a stable complex. GrpE releases ADP from DnaK; ATP binding to DnaK triggers the release of the substrate protein, thus completing the reaction cycle. Several rounds of ATP-dependent interactions between DnaJ, DnaK and GrpE are required for fully efficient folding. The sequence is that of Protein GrpE from Listeria welshimeri serovar 6b (strain ATCC 35897 / DSM 20650 / CCUG 15529 / CIP 8149 / NCTC 11857 / SLCC 5334 / V8).